Consider the following 68-residue polypeptide: Toxin Cg2 (68 aa).

The 66-residue stretch at 1–66 (KDGYLVNKST…VYPIPGKTCS (66 aa)) folds into the LCN-type CS-alpha/beta domain. 4 cysteine pairs are disulfide-bonded: cysteine 12–cysteine 65, cysteine 16–cysteine 41, cysteine 25–cysteine 46, and cysteine 29–cysteine 48.

This sequence belongs to the long (4 C-C) scorpion toxin superfamily. Sodium channel inhibitor family. As to expression, expressed by the venom gland.

The protein localises to the secreted. In terms of biological role, binds to sodium channels (Nav) and inhibits them. This is Toxin Cg2 from Centruroides gracilis (Slenderbrown scorpion).